Reading from the N-terminus, the 427-residue chain is Gamma-glutamyl phosphate reductase (427 aa).

It belongs to the gamma-glutamyl phosphate reductase family.

Its subcellular location is the cytoplasm. It carries out the reaction L-glutamate 5-semialdehyde + phosphate + NADP(+) = L-glutamyl 5-phosphate + NADPH + H(+). It participates in amino-acid biosynthesis; L-proline biosynthesis; L-glutamate 5-semialdehyde from L-glutamate: step 2/2. Its function is as follows. Catalyzes the NADPH-dependent reduction of L-glutamate 5-phosphate into L-glutamate 5-semialdehyde and phosphate. The product spontaneously undergoes cyclization to form 1-pyrroline-5-carboxylate. The protein is Gamma-glutamyl phosphate reductase of Sinorhizobium medicae (strain WSM419) (Ensifer medicae).